We begin with the raw amino-acid sequence, 511 residues long: 2-isopropylmalate synthase (511 aa).

The Pyruvate carboxyltransferase domain occupies 4–266 (IRIFDTTLRD…ETGIDLSQLY (263 aa)). The Mn(2+) site is built by Asp-13, His-201, His-203, and Asn-237. A regulatory domain region spans residues 391-511 (VLEKIRVVSG…IAANARAQKN (121 aa)).

The protein belongs to the alpha-IPM synthase/homocitrate synthase family. LeuA type 1 subfamily. In terms of assembly, homodimer. Mn(2+) serves as cofactor.

The protein localises to the cytoplasm. The catalysed reaction is 3-methyl-2-oxobutanoate + acetyl-CoA + H2O = (2S)-2-isopropylmalate + CoA + H(+). It participates in amino-acid biosynthesis; L-leucine biosynthesis; L-leucine from 3-methyl-2-oxobutanoate: step 1/4. Its function is as follows. Catalyzes the condensation of the acetyl group of acetyl-CoA with 3-methyl-2-oxobutanoate (2-ketoisovalerate) to form 3-carboxy-3-hydroxy-4-methylpentanoate (2-isopropylmalate). This is 2-isopropylmalate synthase from Acetivibrio thermocellus (strain ATCC 27405 / DSM 1237 / JCM 9322 / NBRC 103400 / NCIMB 10682 / NRRL B-4536 / VPI 7372) (Clostridium thermocellum).